The sequence spans 297 residues: Protease HtpX homolog (297 aa).

2 consecutive transmembrane segments (helical) span residues 14–34 (VILL…AGYL) and 39–59 (YQLG…SMIF). Residue histidine 143 participates in Zn(2+) binding. Glutamate 144 is an active-site residue. Position 147 (histidine 147) interacts with Zn(2+). 2 consecutive transmembrane segments (helical) span residues 158–178 (IAVA…RMMW) and 193–213 (GFGA…PLAA). Glutamate 225 contacts Zn(2+).

It belongs to the peptidase M48B family. The cofactor is Zn(2+).

The protein localises to the cell membrane. This Streptococcus equi subsp. zooepidemicus (strain MGCS10565) protein is Protease HtpX homolog.